We begin with the raw amino-acid sequence, 420 residues long: D-tagatose-1,6-bisphosphate aldolase subunit GatZ (420 aa).

The protein belongs to the GatZ/KbaZ family. GatZ subfamily. As to quaternary structure, forms a complex with GatY.

It functions in the pathway carbohydrate metabolism; D-tagatose 6-phosphate degradation; D-glyceraldehyde 3-phosphate and glycerone phosphate from D-tagatose 6-phosphate: step 2/2. In terms of biological role, component of the tagatose-1,6-bisphosphate aldolase GatYZ that is required for full activity and stability of the Y subunit. Could have a chaperone-like function for the proper and stable folding of GatY. When expressed alone, GatZ does not show any aldolase activity. Is involved in the catabolism of galactitol. The protein is D-tagatose-1,6-bisphosphate aldolase subunit GatZ of Escherichia coli O8 (strain IAI1).